The chain runs to 272 residues: Putative hydro-lyase BRADO2538 (272 aa).

It belongs to the D-glutamate cyclase family.

This is Putative hydro-lyase BRADO2538 from Bradyrhizobium sp. (strain ORS 278).